A 242-amino-acid polypeptide reads, in one-letter code: Type III pantothenate kinase (242 aa).

5–12 (DLGNTRLK) contacts ATP. Residues Tyr94 and 100-103 (GCDR) each bind substrate. Asp102 serves as the catalytic Proton acceptor. Thr124 lines the ATP pocket. Thr175 provides a ligand contact to substrate.

This sequence belongs to the type III pantothenate kinase family. Homodimer. NH4(+) is required as a cofactor. The cofactor is K(+).

The protein localises to the cytoplasm. It catalyses the reaction (R)-pantothenate + ATP = (R)-4'-phosphopantothenate + ADP + H(+). It functions in the pathway cofactor biosynthesis; coenzyme A biosynthesis; CoA from (R)-pantothenate: step 1/5. In terms of biological role, catalyzes the phosphorylation of pantothenate (Pan), the first step in CoA biosynthesis. This Psychrobacter arcticus (strain DSM 17307 / VKM B-2377 / 273-4) protein is Type III pantothenate kinase.